We begin with the raw amino-acid sequence, 97 residues long: Mitochondrial import inner membrane translocase subunit Tim8 A (97 aa).

The short motif at 43–66 is the Twin CX3C motif element; sequence CWEKCMDKPGPKLDSRAEACFVNC. Intrachain disulfides connect Cys43-Cys66 and Cys47-Cys62. 4 positions are modified to phosphoserine: Ser57, Ser87, Ser94, and Ser96.

This sequence belongs to the small Tim family. As to quaternary structure, heterohexamer; composed of 3 copies of TIMM8A and 3 copies of TIMM13, named soluble 70 kDa complex. Associates with the TIM22 complex, whose core is composed of TIMM22.

The protein resides in the mitochondrion inner membrane. Functionally, mitochondrial intermembrane chaperone that participates in the import and insertion of some multi-pass transmembrane proteins into the mitochondrial inner membrane. Also required for the transfer of beta-barrel precursors from the TOM complex to the sorting and assembly machinery (SAM complex) of the outer membrane. Acts as a chaperone-like protein that protects the hydrophobic precursors from aggregation and guide them through the mitochondrial intermembrane space. The TIMM8-TIMM13 complex mediates the import of proteins such as TIMM23, SLC25A12/ARALAR1 and SLC25A13/ARALAR2, while the predominant TIMM9-TIMM10 70 kDa complex mediates the import of much more proteins. This chain is Mitochondrial import inner membrane translocase subunit Tim8 A (TIMM8A), found in Bos taurus (Bovine).